A 449-amino-acid polypeptide reads, in one-letter code: UDP-glycosyltransferase 76E6 (449 aa).

UDP-alpha-D-glucose contacts are provided by residues S274, 333–335, 350–358, and 372–375; these read APQ, HCGWNSTLE, and HGEQ.

It belongs to the UDP-glycosyltransferase family.

The chain is UDP-glycosyltransferase 76E6 (UGT76E6) from Arabidopsis thaliana (Mouse-ear cress).